The sequence spans 67 residues: MDIVKFESESSQGLHELLVNLRKEFVNLAFQKKLGQCNNFSRFSLIRKSIARSLTVLNRRKREGKNA.

This sequence belongs to the universal ribosomal protein uL29 family.

This is Large ribosomal subunit protein uL29 from Wolbachia pipientis subsp. Culex pipiens (strain wPip).